The primary structure comprises 543 residues: ATP synthase subunit alpha (543 aa).

Residue 174-181 participates in ATP binding; it reads GDRQTGKT.

Belongs to the ATPase alpha/beta chains family. As to quaternary structure, F-type ATPases have 2 components, CF(1) - the catalytic core - and CF(0) - the membrane proton channel. CF(1) has five subunits: alpha(3), beta(3), gamma(1), delta(1), epsilon(1). CF(0) has three main subunits: a(1), b(2) and c(9-12). The alpha and beta chains form an alternating ring which encloses part of the gamma chain. CF(1) is attached to CF(0) by a central stalk formed by the gamma and epsilon chains, while a peripheral stalk is formed by the delta and b chains.

The protein resides in the cell membrane. The enzyme catalyses ATP + H2O + 4 H(+)(in) = ADP + phosphate + 5 H(+)(out). Its function is as follows. Produces ATP from ADP in the presence of a proton gradient across the membrane. The alpha chain is a regulatory subunit. The protein is ATP synthase subunit alpha of Bifidobacterium longum subsp. infantis (strain ATCC 15697 / DSM 20088 / JCM 1222 / NCTC 11817 / S12).